We begin with the raw amino-acid sequence, 955 residues long: RNA polymerase-associated protein RapA (955 aa).

The Helicase ATP-binding domain occupies 163 to 333; sequence EVGHRYAPRV…FARLRLLDPE (171 aa). 176 to 183 is a binding site for ATP; the sequence is DEVGLGKT. A DEAH box motif is present at residues 279 to 282; that stretch reads DEAH. Residues 478 to 642 enclose the Helicase C-terminal domain; sequence RVDWLLELLL…AVRDELFELL (165 aa).

It belongs to the SNF2/RAD54 helicase family. RapA subfamily. In terms of assembly, interacts with the RNAP. Has a higher affinity for the core RNAP than for the holoenzyme. Its ATPase activity is stimulated by binding to RNAP.

In terms of biological role, transcription regulator that activates transcription by stimulating RNA polymerase (RNAP) recycling in case of stress conditions such as supercoiled DNA or high salt concentrations. Probably acts by releasing the RNAP, when it is trapped or immobilized on tightly supercoiled DNA. Does not activate transcription on linear DNA. Probably not involved in DNA repair. The protein is RNA polymerase-associated protein RapA of Aeromonas salmonicida (strain A449).